Consider the following 222-residue polypeptide: Coiled-coil domain-containing protein 43 homolog (222 aa).

Residues 80 to 111 (ETENKLKLTNLKLEQELKIKETTQSEINEEEK) are a coiled coil. Disordered regions lie at residues 102-126 (TQSE…EQKK) and 159-222 (EDNK…KRRL). Basic and acidic residues-rich tracts occupy residues 112–126 (YENP…EQKK) and 175–212 (RIAD…EEKK). Residues 168-222 (GENLNAKRIADEEKAKREKSKIEHQKKVQRDKEALEKQKRDEEKKKTVKKEKRRL) are a coiled coil. Residues 213-222 (KTVKKEKRRL) are compositionally biased toward basic residues.

Belongs to the CCDC43 family.

The sequence is that of Coiled-coil domain-containing protein 43 homolog from Dictyostelium discoideum (Social amoeba).